Here is a 428-residue protein sequence, read N- to C-terminus: Putative oxidoreductase YteT (428 aa).

Residues 1-23 (MKNIVFCGLSSRAFSMFIKPLME) form the signal peptide.

Belongs to the Gfo/Idh/MocA family.

Its function is as follows. May play a role in the degradation of type I rhamnogalacturonan derived from plant cell walls. The chain is Putative oxidoreductase YteT (yteT) from Bacillus subtilis (strain 168).